A 461-amino-acid polypeptide reads, in one-letter code: D-phenylhydantoinase (461 aa).

His-59, His-61, and Lys-151 together coordinate a divalent metal cation. Lys-151 is subject to N6-carboxylysine. Tyr-156 contacts substrate. Residues His-182 and His-239 each contribute to the a divalent metal cation site. Substrate is bound at residue Ser-286. Asp-313 is an a divalent metal cation binding site. Asn-335 contributes to the substrate binding site.

The protein belongs to the metallo-dependent hydrolases superfamily. Hydantoinase/dihydropyrimidinase family. In terms of assembly, homotetramer. A divalent metal cation serves as cofactor. Carboxylation allows a single lysine to coordinate two divalent metal cations.

It carries out the reaction D-5-phenylhydantoin + H2O = N-carbamoyl-D-phenylglycine + H(+). In terms of biological role, catalyzes the stereospecific hydrolysis of the cyclic amide bond of D-hydantoin derivatives with an aromatic side chains at the 5'-position. Has no activity on dihydropyrimidines. The physiological function is unknown. The protein is D-phenylhydantoinase of Escherichia coli (strain UTI89 / UPEC).